The chain runs to 244 residues: Large ribosomal subunit protein uL2 (244 aa).

2 stretches are compositionally biased toward basic residues: residues 1–12 (MGKRPLVRRRGR) and 234–244 (KTGRARIKERK). Disordered regions lie at residues 1–30 (MGKRPLVRRRGRGGNQFRSTSTGKVGTKAN) and 203–244 (HGGG…KERK).

It belongs to the universal ribosomal protein uL2 family. Part of the 50S ribosomal subunit. Forms a bridge to the 30S subunit in the 70S ribosome.

Its function is as follows. One of the primary rRNA binding proteins. Required for association of the 30S and 50S subunits to form the 70S ribosome, for tRNA binding and peptide bond formation. It has been suggested to have peptidyltransferase activity; this is somewhat controversial. Makes several contacts with the 16S rRNA in the 70S ribosome. The sequence is that of Large ribosomal subunit protein uL2 from Nitrosopumilus maritimus (strain SCM1).